A 217-amino-acid chain; its full sequence is Oxygen-evolving enhancer protein 3, chloroplastic (217 aa).

2 disordered regions span residues 1–25 (MAQA…RRAG) and 73–95 (PIKL…SDQA). Residues 1–63 (MAQAMASMTG…ATGIAGGALA (63 aa)) constitute a chloroplast transit peptide.

It belongs to the PsbQ family.

The protein resides in the plastid. It localises to the chloroplast thylakoid membrane. The sequence is that of Oxygen-evolving enhancer protein 3, chloroplastic from Oryza sativa subsp. indica (Rice).